Consider the following 438-residue polypeptide: Adenylosuccinate synthetase (438 aa).

Residues 13–19 and 41–43 each bind GTP; these read GDEGKGK and GHT. Aspartate 14 (proton acceptor) is an active-site residue. Residues aspartate 14 and glycine 41 each contribute to the Mg(2+) site. Residues 14–17, 39–42, threonine 130, arginine 144, glutamine 225, threonine 240, and arginine 310 contribute to the IMP site; these read DEGK and NAGH. Residue histidine 42 is the Proton donor of the active site. Substrate is bound at residue 306–312; that stretch reads ATTGRLR. GTP contacts are provided by residues arginine 312, 338 to 340, and 421 to 423; these read KLD and STG.

Belongs to the adenylosuccinate synthetase family. In terms of assembly, homodimer. Mg(2+) is required as a cofactor.

The protein resides in the cytoplasm. It carries out the reaction IMP + L-aspartate + GTP = N(6)-(1,2-dicarboxyethyl)-AMP + GDP + phosphate + 2 H(+). The protein operates within purine metabolism; AMP biosynthesis via de novo pathway; AMP from IMP: step 1/2. Functionally, plays an important role in the de novo pathway of purine nucleotide biosynthesis. Catalyzes the first committed step in the biosynthesis of AMP from IMP. The polypeptide is Adenylosuccinate synthetase (Vibrio vulnificus (strain YJ016)).